Consider the following 395-residue polypeptide: Phosphopentomutase (395 aa).

Mn(2+)-binding residues include D14, D286, H291, D327, H328, and H339.

It belongs to the phosphopentomutase family. Mn(2+) is required as a cofactor.

The protein localises to the cytoplasm. The enzyme catalyses 2-deoxy-alpha-D-ribose 1-phosphate = 2-deoxy-D-ribose 5-phosphate. It catalyses the reaction alpha-D-ribose 1-phosphate = D-ribose 5-phosphate. It functions in the pathway carbohydrate degradation; 2-deoxy-D-ribose 1-phosphate degradation; D-glyceraldehyde 3-phosphate and acetaldehyde from 2-deoxy-alpha-D-ribose 1-phosphate: step 1/2. Isomerase that catalyzes the conversion of deoxy-ribose 1-phosphate (dRib-1-P) and ribose 1-phosphate (Rib-1-P) to deoxy-ribose 5-phosphate (dRib-5-P) and ribose 5-phosphate (Rib-5-P), respectively. The sequence is that of Phosphopentomutase from Staphylococcus saprophyticus subsp. saprophyticus (strain ATCC 15305 / DSM 20229 / NCIMB 8711 / NCTC 7292 / S-41).